A 254-amino-acid chain; its full sequence is MTTALCWQTEGQGSDLVLIHGWGMNGAVWQQLLPLLTPFYRVHWVDMPGYGHSHDISADSIEEMAQLLLDKSPISATWLGWSLGGLVATQAALLAPERVTRLVTVASSPRFAAEGTWRGIQPQVLDDFRRQLGDDFQLTVERFLALQAMGSPTARQDIKLLKQAVLSRPQPNPEALSIGLRLLADVDLRAQLGDITQPWLRLYGRLDGLVPAKVAKDMDQLAPQSCRQIFAAASHAPFISHPEEFVQTLKDFIK.

Residues Leu-16–Pro-242 form the AB hydrolase-1 domain. Substrate-binding positions include Trp-22, Ser-82–Leu-83, and Phe-143–Gln-147. Ser-82 acts as the Nucleophile in catalysis. Residues Asp-207 and His-235 contribute to the active site. His-235 contacts substrate.

It belongs to the AB hydrolase superfamily. Carboxylesterase BioH family. In terms of assembly, monomer.

The protein resides in the cytoplasm. It catalyses the reaction 6-carboxyhexanoyl-[ACP] methyl ester + H2O = 6-carboxyhexanoyl-[ACP] + methanol + H(+). It functions in the pathway cofactor biosynthesis; biotin biosynthesis. The physiological role of BioH is to remove the methyl group introduced by BioC when the pimeloyl moiety is complete. It allows to synthesize pimeloyl-ACP via the fatty acid synthetic pathway through the hydrolysis of the ester bonds of pimeloyl-ACP esters. In Photobacterium profundum (strain SS9), this protein is Pimeloyl-[acyl-carrier protein] methyl ester esterase.